Consider the following 265-residue polypeptide: NAD kinase 2 (265 aa).

Asn-51 (proton acceptor) is an active-site residue. NAD(+)-binding positions include 122-123, Arg-149, Asp-151, 162-167, Ala-186, and Asn-226; these read NE and TAYNKS.

This sequence belongs to the NAD kinase family. Requires a divalent metal cation as cofactor.

The protein resides in the cytoplasm. The enzyme catalyses NAD(+) + ATP = ADP + NADP(+) + H(+). Its function is as follows. Involved in the regulation of the intracellular balance of NAD and NADP, and is a key enzyme in the biosynthesis of NADP. Catalyzes specifically the phosphorylation on 2'-hydroxyl of the adenosine moiety of NAD to yield NADP. The protein is NAD kinase 2 of Halalkalibacterium halodurans (strain ATCC BAA-125 / DSM 18197 / FERM 7344 / JCM 9153 / C-125) (Bacillus halodurans).